The chain runs to 436 residues: UDP-N-acetylmuramate--L-alanine ligase (436 aa).

ATP is bound at residue 108–114 (GAHGKTS).

It belongs to the MurCDEF family.

The protein resides in the cytoplasm. The enzyme catalyses UDP-N-acetyl-alpha-D-muramate + L-alanine + ATP = UDP-N-acetyl-alpha-D-muramoyl-L-alanine + ADP + phosphate + H(+). The protein operates within cell wall biogenesis; peptidoglycan biosynthesis. Its function is as follows. Cell wall formation. The protein is UDP-N-acetylmuramate--L-alanine ligase of Bacillus cereus (strain ZK / E33L).